The primary structure comprises 559 residues: Oxygen-dependent choline dehydrogenase (559 aa).

4 to 33 contacts FAD; sequence DYIIIGAGSAGNVLATRLTEDSDVTVLLLE. Residue histidine 473 is the Proton acceptor of the active site.

It belongs to the GMC oxidoreductase family. Requires FAD as cofactor.

It catalyses the reaction choline + A = betaine aldehyde + AH2. It carries out the reaction betaine aldehyde + NAD(+) + H2O = glycine betaine + NADH + 2 H(+). The protein operates within amine and polyamine biosynthesis; betaine biosynthesis via choline pathway; betaine aldehyde from choline (cytochrome c reductase route): step 1/1. Functionally, involved in the biosynthesis of the osmoprotectant glycine betaine. Catalyzes the oxidation of choline to betaine aldehyde and betaine aldehyde to glycine betaine at the same rate. The protein is Oxygen-dependent choline dehydrogenase of Cronobacter sakazakii (strain ATCC BAA-894) (Enterobacter sakazakii).